A 281-amino-acid chain; its full sequence is 3-hydroxyanthranilate 3,4-dioxygenase (281 aa).

Residues 1–162 form a domain A (catalytic) region; that stretch reads MAGVTAIEIP…SNEFKTGKPG (162 aa). R45 contributes to the O2 binding site. Fe cation-binding residues include H49, E55, and H93. Residue E55 coordinates substrate. Positions 97 and 107 each coordinate substrate. Positions 163-179 are linker; the sequence is KGTFACNAPYEARWTDL. A domain B region spans residues 180 to 281; the sequence is PVPINRKEFI…GFAITIRMPG (102 aa).

It belongs to the 3-HAO family. Fe(2+) is required as a cofactor.

The protein resides in the cytoplasm. The enzyme catalyses 3-hydroxyanthranilate + O2 = (2Z,4Z)-2-amino-3-carboxymuconate 6-semialdehyde. It functions in the pathway cofactor biosynthesis; NAD(+) biosynthesis; quinolinate from L-kynurenine: step 3/3. Its function is as follows. Catalyzes the oxidative ring opening of 3-hydroxyanthranilate to 2-amino-3-carboxymuconate semialdehyde, which spontaneously cyclizes to quinolinate. The polypeptide is 3-hydroxyanthranilate 3,4-dioxygenase (haao-1) (Caenorhabditis briggsae).